The following is a 157-amino-acid chain: uncharacterized protein (157 aa).

Positions 1-23 (MEALRRAHEATLRLLLCRPWASG) are cleaved as a signal peptide.

Its subcellular location is the secreted. This is an uncharacterized protein from Mus musculus (Mouse).